A 337-amino-acid chain; its full sequence is Alcohol dehydrogenase 1 (337 aa).

The Zn(2+) site is built by Cys-37, His-58, Cys-89, Cys-92, Cys-95, Cys-103, and Cys-145.

Belongs to the zinc-containing alcohol dehydrogenase family. Multimeric (with different ratios of monomers). Zn(2+) serves as cofactor.

The catalysed reaction is a primary alcohol + NAD(+) = an aldehyde + NADH + H(+). The enzyme catalyses a secondary alcohol + NAD(+) = a ketone + NADH + H(+). It participates in alcohol metabolism; ethanol biosynthesis via fermentation pathway. Its activity is regulated as follows. Inhibited by ethanol. The chain is Alcohol dehydrogenase 1 (adhA) from Zymomonas mobilis subsp. mobilis (strain ATCC 31821 / ZM4 / CP4).